The following is a 311-amino-acid chain: LOB domain-containing protein 10 (311 aa).

One can recognise an LOB domain in the interval 4–105 (TPCAACKLLR…QDLLTAKEEL (102 aa)). Low complexity predominate over residues 264–277 (LQEGQEQTEEGQFL). Positions 264–311 (LQEGQEQTEEGQFLMQPMGQENLHDEEEEEELEPPVKWRMSENKEASF) are disordered. A compositionally biased stretch (acidic residues) spans 287-296 (HDEEEEEELE). A compositionally biased stretch (basic and acidic residues) spans 297 to 311 (PPVKWRMSENKEASF).

This sequence belongs to the LOB domain-containing protein family.

The chain is LOB domain-containing protein 10 (LBD10) from Arabidopsis thaliana (Mouse-ear cress).